A 262-amino-acid chain; its full sequence is tRNA pseudouridine synthase A (262 aa).

Aspartate 51 functions as the Nucleophile in the catalytic mechanism. Tyrosine 106 is a binding site for substrate.

It belongs to the tRNA pseudouridine synthase TruA family.

The enzyme catalyses uridine(38/39/40) in tRNA = pseudouridine(38/39/40) in tRNA. Its function is as follows. Formation of pseudouridine at positions 38, 39 and 40 in the anticodon stem and loop of transfer RNAs. The chain is tRNA pseudouridine synthase A from Pyrococcus horikoshii (strain ATCC 700860 / DSM 12428 / JCM 9974 / NBRC 100139 / OT-3).